Consider the following 288-residue polypeptide: Shikimate dehydrogenase (NADP(+)) (288 aa).

Residues 15–17 (SKS) and Thr-64 each bind shikimate. The active-site Proton acceptor is Lys-68. Glu-83 lines the NADP(+) pocket. Shikimate contacts are provided by Asn-92 and Asp-117. Residues 141-145 (GAGGA), 165-170 (NRTVSK), and Met-232 each bind NADP(+). Tyr-234 is a binding site for shikimate. An NADP(+)-binding site is contributed by Gly-254.

The protein belongs to the shikimate dehydrogenase family. In terms of assembly, homodimer.

The catalysed reaction is shikimate + NADP(+) = 3-dehydroshikimate + NADPH + H(+). The protein operates within metabolic intermediate biosynthesis; chorismate biosynthesis; chorismate from D-erythrose 4-phosphate and phosphoenolpyruvate: step 4/7. Its function is as follows. Involved in the biosynthesis of the chorismate, which leads to the biosynthesis of aromatic amino acids. Catalyzes the reversible NADPH linked reduction of 3-dehydroshikimate (DHSA) to yield shikimate (SA). The polypeptide is Shikimate dehydrogenase (NADP(+)) (Psychrobacter cryohalolentis (strain ATCC BAA-1226 / DSM 17306 / VKM B-2378 / K5)).